We begin with the raw amino-acid sequence, 236 residues long: MTNLLEASIEQAGYTSRKKVLTDVFLEVRKGELVGLIGANGAGKSTAIKAILGLSEDFKGHIAWNDCSFAYIPEHPSFYEELTLWEHLDLISTLHGIEESEFAHRAQSLLQTFSLDHVKHELPVTFSKGMQQKLMLIQAFLSKPDMYVIDEPFIGLDPISTKRFVDMLKAEKERGAGILMCTHVLDTAEKICDRFYMIEKGSLFLQGTLKDVQDKTGLEGQSLLDCFYKAVQGDRL.

In terms of domain architecture, ABC transporter spans 4-225; it reads LLEASIEQAG…TGLEGQSLLD (222 aa). 38-45 contributes to the ATP binding site; it reads GANGAGKS.

It belongs to the ABC transporter superfamily.

This is an uncharacterized protein from Bacillus subtilis (strain 168).